The sequence spans 174 residues: Co-chaperone protein HscB homolog (174 aa).

One can recognise a J domain in the interval 2–74; that stretch reads NYFELFKFSP…IRRAEHMLSL (73 aa).

The protein belongs to the HscB family. Interacts with HscA and stimulates its ATPase activity.

In terms of biological role, co-chaperone involved in the maturation of iron-sulfur cluster-containing proteins. Seems to help targeting proteins to be folded toward HscA. The sequence is that of Co-chaperone protein HscB homolog from Shewanella baltica (strain OS155 / ATCC BAA-1091).